Consider the following 242-residue polypeptide: Uridylate kinase (242 aa).

15–18 (KLSG) provides a ligand contact to ATP. The tract at residues 23–28 (GDEGFG) is involved in allosteric activation by GTP. Gly57 lines the UMP pocket. The ATP site is built by Gly58 and Arg62. UMP contacts are provided by residues Asp77 and 138–145 (TGNPFCTT). The ATP site is built by Thr165, Tyr171, and Asp174.

Belongs to the UMP kinase family. In terms of assembly, homohexamer.

The protein localises to the cytoplasm. It carries out the reaction UMP + ATP = UDP + ADP. Its pathway is pyrimidine metabolism; CTP biosynthesis via de novo pathway; UDP from UMP (UMPK route): step 1/1. Its activity is regulated as follows. Allosterically activated by GTP. Inhibited by UTP. Functionally, catalyzes the reversible phosphorylation of UMP to UDP. This Shewanella sp. (strain MR-4) protein is Uridylate kinase.